Here is a 416-residue protein sequence, read N- to C-terminus: Cytochrome P450 monooxygenase PikC (416 aa).

Residues Glu-94, 187 to 191 (AQTAM), and 238 to 246 (HILLVAGHE) each bind substrate. Cys-354 serves as a coordination point for heme.

This sequence belongs to the cytochrome P450 family. Heme serves as cofactor.

The catalysed reaction is narbomycin + 2 reduced [2Fe-2S]-[ferredoxin] + O2 + 2 H(+) = pikromycin + 2 oxidized [2Fe-2S]-[ferredoxin] + H2O. It carries out the reaction narbomycin + 2 reduced [2Fe-2S]-[ferredoxin] + O2 + 2 H(+) = neopikromycin + 2 oxidized [2Fe-2S]-[ferredoxin] + H2O. It catalyses the reaction narbomycin + 4 reduced [2Fe-2S]-[ferredoxin] + 2 O2 + 4 H(+) = novapikromycin + 4 oxidized [2Fe-2S]-[ferredoxin] + 2 H2O. The enzyme catalyses 10-deoxymethymycin + 2 reduced [2Fe-2S]-[ferredoxin] + O2 + 2 H(+) = methymycin + 2 oxidized [2Fe-2S]-[ferredoxin] + H2O. The catalysed reaction is 10-deoxymethymycin + 2 reduced [2Fe-2S]-[ferredoxin] + O2 + 2 H(+) = neomethymycin + 2 oxidized [2Fe-2S]-[ferredoxin] + H2O. It carries out the reaction 10-deoxymethymycin + 4 reduced [2Fe-2S]-[ferredoxin] + 2 O2 + 4 H(+) = novamethymycin + 4 oxidized [2Fe-2S]-[ferredoxin] + 2 H2O. The protein operates within antibiotic biosynthesis. Functionally, catalyzes the hydroxylation of narbomycin to give rise to pikromycin, and of 10-deoxymethymycin (YC-17) to give rise to methymycin and neomethymycin during macrolide antibiotic biosynthesis. In addition, produces low amounts of neopicromycin, novapikromycin and novamethymycin. Requires the participation of a ferredoxin and a ferredoxin reductase for the transfer of electrons from NADPH to the monooxygenase. This is Cytochrome P450 monooxygenase PikC from Streptomyces venezuelae.